Consider the following 297-residue polypeptide: uncharacterized protein (297 aa).

Disordered regions lie at residues 12–43 (QNNN…TNDN), 65–85 (VPNS…DKPI), 122–151 (KVST…TNET), and 265–297 (SRLS…DQNN). Residues 65–79 (VPNSINVNTSSSGNK) show a composition bias toward polar residues. Over residues 122 to 135 (KVSTTTTTTSSTSK) the composition is skewed to low complexity. Residues 140 to 151 (QTITKPNKTNET) are compositionally biased toward polar residues. Low complexity predominate over residues 268–287 (SSNNNNNNNNNNNNNNNNSN).

This is an uncharacterized protein from Dictyostelium discoideum (Social amoeba).